The primary structure comprises 890 residues: Translation initiation factor IF-2 (890 aa).

Positions 45–304 are disordered; that stretch reads LIDHLNQKNS…LQQGFQKPAQ (260 aa). Residues 67 to 81 are compositionally biased toward polar residues; the sequence is STLNIPGTGGKSKSV. Basic and acidic residues predominate over residues 92 to 217; sequence VKRDPQEAER…RMAEENKWTD (126 aa). Residues 252 to 266 are compositionally biased toward basic residues; that stretch reads GRGRNAKAARPKKGN. Over residues 267-280 the composition is skewed to basic and acidic residues; it reads KHAESKADREEARA. The tr-type G domain maps to 389–558; that stretch reads PRAPVVTIMG…LLQAEVLELK (170 aa). Residues 398 to 405 form a G1 region; sequence GHVDHGKT. 398 to 405 lines the GTP pocket; that stretch reads GHVDHGKT. The interval 423 to 427 is G2; sequence GITQH. Residues 444 to 447 are G3; it reads DTPG. Residues 444–448 and 498–501 contribute to the GTP site; these read DTPGH and NKID. Residues 498–501 are G4; the sequence is NKID. Residues 534–536 form a G5 region; that stretch reads SAK. The residue at position 808 (K808) is an N6-acetyllysine.

Belongs to the TRAFAC class translation factor GTPase superfamily. Classic translation factor GTPase family. IF-2 subfamily.

Its subcellular location is the cytoplasm. Its function is as follows. One of the essential components for the initiation of protein synthesis. Protects formylmethionyl-tRNA from spontaneous hydrolysis and promotes its binding to the 30S ribosomal subunits. Also involved in the hydrolysis of GTP during the formation of the 70S ribosomal complex. The protein is Translation initiation factor IF-2 of Escherichia coli (strain 55989 / EAEC).